The chain runs to 310 residues: Homoserine kinase (310 aa).

91–101 (PIGSGLGSSAC) contributes to the ATP binding site.

Belongs to the GHMP kinase family. Homoserine kinase subfamily.

It is found in the cytoplasm. The catalysed reaction is L-homoserine + ATP = O-phospho-L-homoserine + ADP + H(+). The protein operates within amino-acid biosynthesis; L-threonine biosynthesis; L-threonine from L-aspartate: step 4/5. Its function is as follows. Catalyzes the ATP-dependent phosphorylation of L-homoserine to L-homoserine phosphate. The polypeptide is Homoserine kinase (Escherichia coli O81 (strain ED1a)).